The sequence spans 166 residues: Ribosome maturation factor RimM (166 aa).

Residues 94–165 (EGEYYLGKLI…TIELKVLDLL (72 aa)) form the PRC barrel domain.

Belongs to the RimM family. In terms of assembly, binds ribosomal protein uS19.

The protein localises to the cytoplasm. Its function is as follows. An accessory protein needed during the final step in the assembly of 30S ribosomal subunit, possibly for assembly of the head region. Essential for efficient processing of 16S rRNA. May be needed both before and after RbfA during the maturation of 16S rRNA. It has affinity for free ribosomal 30S subunits but not for 70S ribosomes. This Borrelia garinii subsp. bavariensis (strain ATCC BAA-2496 / DSM 23469 / PBi) (Borreliella bavariensis) protein is Ribosome maturation factor RimM.